Consider the following 475-residue polypeptide: MAGRPHPYDSNSSDPENWDRKLHSRPRKLYKHSSSASRVAKGGVDHTKMSLHGASGGHERSRDRRRSSDRSRDSSHERAESQLTPCIRNVTSPTRQHHIEREKDHSSSRPSSPRPQRASPNGSMSSAGNSSRNSSQSSSDGSCKTSGEMVFVYENAKEGARNVRTSERVTLIVDNTRFVVDPSIFTAQPNTMLGRMFGSGREHNFTRPNEKGEYEVAEGIGSTVFRAILDYYKTGIIRCPDGISIPELREACDYLCISFEYSTIKCRDLSALMHELSNDGARRQFEFYLEEMILPLMVASAQSGERECHIVVLTDDDVVDWDEEYPPQMGEEYSQIIYSTKLYRFFKYIENRDVAKSVLKERGLKKIRLGIEGYPTYKEKVKKRPGGRPEVIYNYVQRPFIRMSWEKEEGKSRHVDFQCVKSKSITNLAAAAADIPQDQLVVMHPTPQVDELDILPSHPASGNNDLDPDAQNPML.

The segment at 1–144 is disordered; the sequence is MAGRPHPYDS…SQSSSDGSCK (144 aa). Positions 22 to 31 are enriched in basic residues; that stretch reads LHSRPRKLYK. Basic and acidic residues predominate over residues 57 to 80; the sequence is GHERSRDRRRSSDRSRDSSHERAE. Positions 81–94 are enriched in polar residues; it reads SQLTPCIRNVTSPT. Residues 97–107 are compositionally biased toward basic and acidic residues; that stretch reads HHIEREKDHSS. The segment covering 108-144 has biased composition (low complexity); the sequence is SRPSSPRPQRASPNGSMSSAGNSSRNSSQSSSDGSCK. The segment at 146–475 is interaction with AKT family members; sequence SGEMVFVYEN…LDPDAQNPML (330 aa). The region spanning 167 to 241 is the BTB domain; that stretch reads ERVTLIVDNT…YKTGIIRCPD (75 aa). The disordered stretch occupies residues 451–475; sequence ELDILPSHPASGNNDLDPDAQNPML.

Interacts (via C-terminal 330-amino-acid region) with AKT1; AKT2 and AKT3. Interacts with PPP2CA and PPP1CA. As to expression, ubiquitously expressed (at protein level).

The protein resides in the nucleus. It localises to the cytoplasm. Plays a major role as an activator of AKT family members by inhibiting PPP2CA-mediated dephosphorylation, thereby keeping AKTs activated. Plays a role in preventing motor neuronal death and in accelerating the growth of pancreatic beta cells. The polypeptide is BTB/POZ domain-containing protein 10 (Btbd10) (Mus musculus (Mouse)).